The chain runs to 122 residues: Nodulation protein NolR (122 aa).

The 95-residue stretch at 15–109 folds into the HTH arsR-type domain; that stretch reads EKHEDAEIAA…ALSDIYGDDT (95 aa). The H-T-H motif DNA-binding region spans 49 to 68; sequence VGALAHKVGLSQSALSQHLS.

Binds to the operator site in homodimeric form.

Its function is as follows. Negative transacting factor controlling the nod regulon. May control the expression of nodD1, nodD2, nodD3 and nodABC genes. The chain is Nodulation protein NolR (nolR) from Rhizobium meliloti (Ensifer meliloti).